Consider the following 829-residue polypeptide: Cadherin-3 (829 aa).

The signal sequence occupies residues 1 to 24; the sequence is MGLPRGPLASLLLLQVCWLQCAAS. The propeptide occupies 25-107; that stretch reads EPCRAVFREA…SKRILRRHKR (83 aa). Cadherin domains are found at residues 108–215, 216–328, 329–440, 441–546, and 547–650; these read DWVV…KPKF, TQDT…APMF, DPQK…APVF, VPPS…DHGP, and VPEP…CPGP. Residues 108–654 are Extracellular-facing; sequence DWVVAPISVP…ETCPGPWKGG (547 aa). N-linked (GlcNAc...) asparagine glycosylation occurs at Asn200. Asn566 carries N-linked (GlcNAc...) asparagine glycosylation. A helical transmembrane segment spans residues 655–677; the sequence is FILPVLGAVLALLFLLLVLLLLV. Residues 678–829 are Cytoplasmic-facing; sequence RKKRKIKEPL…ADMYGGGEDD (152 aa).

In terms of assembly, interacts with CDCP1 and CTNNB1. Expressed in some normal epithelial tissues and in some carcinoma cell lines.

The protein resides in the cell membrane. Its function is as follows. Cadherins are calcium-dependent cell adhesion proteins. They preferentially interact with themselves in a homophilic manner in connecting cells; cadherins may thus contribute to the sorting of heterogeneous cell types. This Homo sapiens (Human) protein is Cadherin-3 (CDH3).